The following is a 595-amino-acid chain: Miltiradiene synthase KSL1, chloroplastic (595 aa).

Residues 1-47 (MSLAFNPAATAFSGNGARSRRENFPVKHVTVRGFPMITNKSSFAVKC) constitute a chloroplast transit peptide. Mg(2+) contacts are provided by aspartate 334, aspartate 338, asparagine 478, and glutamate 486. Residues 334–338 (DDFFD) carry the DDXXD motif motif.

It belongs to the terpene synthase family. Requires Mg(2+) as cofactor.

It localises to the plastid. The protein localises to the chloroplast. It catalyses the reaction (+)-copalyl diphosphate = miltiradiene + diphosphate. It functions in the pathway secondary metabolite biosynthesis; terpenoid biosynthesis. Involved in tanshinone biosynthesis in hairy roots. Catalyzes the conversion of copalyl diphosphate (CPP) to miltiradiene. This Salvia miltiorrhiza (Chinese sage) protein is Miltiradiene synthase KSL1, chloroplastic.